We begin with the raw amino-acid sequence, 110 residues long: Insulin-1 (110 aa).

A signal peptide spans 1–24 (MALWMRFLPLLALLVLWEPKPAQA). Disulfide bonds link C31–C96, C43–C109, and C95–C100. The propeptide at 57–87 (EVEDPQVPQLELGGGPEAGDLQTLALEVARQ) is c peptide.

Belongs to the insulin family. Heterodimer of a B chain and an A chain linked by two disulfide bonds.

It localises to the secreted. Insulin decreases blood glucose concentration. It increases cell permeability to monosaccharides, amino acids and fatty acids. It accelerates glycolysis, the pentose phosphate cycle, and glycogen synthesis in liver. The chain is Insulin-1 (Ins1) from Rattus norvegicus (Rat).